The primary structure comprises 744 residues: Catalase-peroxidase 3 (744 aa).

Positions 106 to 228 (WHFAGTYRIG…LAASEMGLIY (123 aa)) form a cross-link, tryptophyl-tyrosyl-methioninium (Trp-Tyr) (with M-254). The active-site Proton acceptor is the histidine 107. The segment at residues 228–254 (YVDPQGPATLPDPLASARDIRETFRRM) is a cross-link (tryptophyl-tyrosyl-methioninium (Tyr-Met) (with W-106)). Histidine 269 lines the heme b pocket.

Belongs to the peroxidase family. Peroxidase/catalase subfamily. As to quaternary structure, homodimer or homotetramer. Requires heme b as cofactor. Formation of the three residue Trp-Tyr-Met cross-link is important for the catalase, but not the peroxidase activity of the enzyme.

The catalysed reaction is H2O2 + AH2 = A + 2 H2O. The enzyme catalyses 2 H2O2 = O2 + 2 H2O. Functionally, bifunctional enzyme with both catalase and broad-spectrum peroxidase activity. This is Catalase-peroxidase 3 from Mycolicibacterium smegmatis (strain ATCC 700084 / mc(2)155) (Mycobacterium smegmatis).